The primary structure comprises 277 residues: MKEPPVQLDLPDNPWLELRRLTPARIALGRTGTSIPTNAQLDFQFAHAQARDAVHLPFDPAGLSSQLAERGRDSLLLHSAAADRHSYLQRPDLGRRLSDESAQALRDHASANPGGVDLAVVVADGLSALAVHKHTLPFLTRMEEQTHAEGWSLSPVILVEQGRVAVADEIGQLLGAKMVVILIGERPGLSSPDSLGLYFTYNPKVGLTDAYRNCISNVRLEGLSYGMAAHRLLYLMREACRRQLSGVNLKDEAQVQTLESDDPDLMKGNFLLSSPDD.

Adenosylcob(III)alamin is bound by residues valine 164, glutamate 185, and cysteine 214.

The protein belongs to the EutC family. The basic unit is a heterodimer which dimerizes to form tetramers. The heterotetramers trimerize; 6 large subunits form a core ring with 6 small subunits projecting outwards. The cofactor is adenosylcob(III)alamin.

It is found in the bacterial microcompartment. It carries out the reaction ethanolamine = acetaldehyde + NH4(+). It participates in amine and polyamine degradation; ethanolamine degradation. In terms of biological role, catalyzes the deamination of various vicinal amino-alcohols to oxo compounds. Allows this organism to utilize ethanolamine as the sole source of nitrogen and carbon in the presence of external vitamin B12. The sequence is that of Ethanolamine ammonia-lyase small subunit from Pseudomonas fluorescens (strain SBW25).